The primary structure comprises 448 residues: Probable intron-encoded endonuclease bI1 (448 aa).

The interval 1–132 (MRLLKSHPLL…LMMATAFLGY (132 aa)) is cob exon 1 encoded. 3 consecutive transmembrane segments (helical) span residues 32 to 52 (FGSL…TLAM), 86 to 106 (ASAF…YGSY), and 112 to 132 (LVWA…FLGY). Residues 133 to 448 (QHSPKWFDIS…QWIVEDFSDK (316 aa)) form a cob intron 1 encoded region. The GIY-YIG domain occupies 230-321 (DLSGVYMIIN…LKLLVPNYNI (92 aa)).

This sequence to endonucleases of group I introns of fungi and phage. In terms of processing, the mature protein may arise from proteolytic cleavage of an in-frame translation of cob exon 1 plus intron 1, containing the bI1 open reading frame.

The protein localises to the mitochondrion inner membrane. Its function is as follows. Mitochondrial DNA endonuclease involved in intron homing. The protein is Probable intron-encoded endonuclease bI1 (bI1) of Neurospora crassa (strain ATCC 24698 / 74-OR23-1A / CBS 708.71 / DSM 1257 / FGSC 987).